A 146-amino-acid polypeptide reads, in one-letter code: MIEMYRKILVPTMGEYMDELIEHTLDLLHGREAEVICLYVVDTAVPFLTPKKVKEMMVKELTQRGNEILRDMEKGLTGPENPNVSFRAVMREGDPADEIVKVAEEEDVDVIVMGTGKSLVDKHLLGSVSEKVVHYAPCTIHLVRTV.

The protein belongs to the universal stress protein A family.

The sequence is that of Universal stress protein MTH_1154 from Methanothermobacter thermautotrophicus (strain ATCC 29096 / DSM 1053 / JCM 10044 / NBRC 100330 / Delta H) (Methanobacterium thermoautotrophicum).